We begin with the raw amino-acid sequence, 209 residues long: Endoplasmic reticulum vesicle protein 25 (209 aa).

The N-terminal stretch at 1-18 (MKYTTFGIISLFLSVTWA) is a signal peptide. Residues 19–178 (LRFELAASFE…TNESTNRRVR (160 aa)) are Lumenal-facing. Positions 31-119 (PFCIRDFVEA…MRNVEVNIES (89 aa)) constitute a GOLD domain. The helical transmembrane segment at 179 to 199 (NFSMAVIVVFAALCAWQLNYL) threads the bilayer. Residues 200-209 (KNYFRAKHII) lie on the Cytoplasmic side of the membrane.

Belongs to the EMP24/GP25L family.

It is found in the endoplasmic reticulum membrane. It localises to the golgi apparatus membrane. Constituent of COPII-coated endoplasmic reticulum-derived transport vesicles. Required for efficient transport of a subset of secretory proteins to the Golgi. Facilitates retrograde transport from the Golgi to the endoplasmic reticulum. The polypeptide is Endoplasmic reticulum vesicle protein 25 (ERV25) (Eremothecium gossypii (strain ATCC 10895 / CBS 109.51 / FGSC 9923 / NRRL Y-1056) (Yeast)).